The following is an 816-amino-acid chain: H(+)/Cl(-) exchange transporter 5 (816 aa).

The Cytoplasmic segment spans residues 1 to 124; it reads MAMWQGAMDN…WALIHSVSDA (124 aa). Helical transmembrane passes span 125 to 162 and 208 to 231; these read FSGW…ICTG and VNYF…VKAF. Residues 237–241 carry the Selectivity filter part_1 motif; the sequence is GSGIP. S238 contributes to the chloride binding site. The helical intramembrane region spans 240–247; the sequence is IPEIKTIL. Transmembrane regions (helical) follow at residues 256 to 275 and 281 to 300; these read LGKW…VSSG and EGPL…HCFN. The Selectivity filter part_2 signature appears at 279 to 283; the sequence is GKEGP. 2 intramembrane regions (helical) span residues 312–324 and 328–336; these read VLSA…VSVA and PIGGVLFSL. The next 5 membrane-spanning stretches (helical) occupy residues 348–366, 389–414, 422–442, 498–518, and 523–542; these read LWRS…RSIN, LVPF…IAWC, LGKY…ILAF, MWQL…TFGM, and GLFI…LGVG. The short motif at 523-527 is the Selectivity filter part_3 element; it reads GLFIP. Position 525 (F525) interacts with chloride. An intramembrane region (helical) is located at residues 570 to 584; sequence GLYAMVGAAACLGGV. An intramembrane region (note=Loop between two helices) is located at residues 585-587; that stretch reads TRM. Residues 588–599 constitute an intramembrane region (helical); it reads TVSLVVIMFELT. Residues 600-604 constitute an intramembrane region (note=Loop between two helices); it reads GGLEY. A helical membrane pass occupies residues 605–622; the sequence is IVPLMAAAMTSKWVADAL. At 623-816 the chain is on the cytoplasmic side; sequence GREGIYDAHI…NQDPDSILFN (194 aa). Y628 is a chloride binding site. CBS domains follow at residues 656–720 and 752–812; these read MKPR…ARKK and ILDL…DPDS. ATP contacts are provided by residues T666, 687–689, and 794–797; these read YSG and TKKD.

Belongs to the chloride channel (TC 2.A.49) family. ClC-5/CLCN5 subfamily. In terms of assembly, interacts with NEDD4 and NEDD4L. Post-translationally, ubiquitinated by NEDD4L in the presence of albumin; which promotes endocytosis and proteasomal degradation. Kidney specific.

The protein resides in the golgi apparatus membrane. It localises to the endosome membrane. It is found in the cell membrane. It carries out the reaction 2 chloride(in) + H(+)(out) = 2 chloride(out) + H(+)(in). Proton-coupled chloride transporter. Functions as antiport system and exchanges chloride ions against protons. Important for normal acidification of the endosome lumen. May play an important role in renal tubular function. The CLC channel family contains both chloride channels and proton-coupled anion transporters that exchange chloride or another anion for protons. The absence of conserved gating glutamate residues is typical for family members that function as channels. In Mus musculus (Mouse), this protein is H(+)/Cl(-) exchange transporter 5 (Clcn5).